A 332-amino-acid polypeptide reads, in one-letter code: Fructose-1,6-bisphosphatase class 1 (332 aa).

4 residues coordinate Mg(2+): glutamate 91, aspartate 112, leucine 114, and aspartate 115. Residues aspartate 115–serine 118, asparagine 208, tyrosine 241, and lysine 271 each bind substrate. Glutamate 277 provides a ligand contact to Mg(2+).

The protein belongs to the FBPase class 1 family. As to quaternary structure, homotetramer. Requires Mg(2+) as cofactor.

It is found in the cytoplasm. It carries out the reaction beta-D-fructose 1,6-bisphosphate + H2O = beta-D-fructose 6-phosphate + phosphate. It functions in the pathway carbohydrate biosynthesis; Calvin cycle. The polypeptide is Fructose-1,6-bisphosphatase class 1 (Chlorobium phaeobacteroides (strain DSM 266 / SMG 266 / 2430)).